A 384-amino-acid chain; its full sequence is H-2 class I histocompatibility antigen, TLA(B) alpha chain (384 aa).

Positions 1 to 26 (MRMGTPVPGTLLILLAASQGQTQTCP) are cleaved as a signal peptide. The alpha-1 stretch occupies residues 27 to 116 (GSHSLRYFYT…MLDYYNLSQN (90 aa)). The Extracellular portion of the chain corresponds to 27 to 314 (GSHSLRYFYT…TSMPNRTTVR (288 aa)). 3 N-linked (GlcNAc...) asparagine glycosylation sites follow: asparagine 63, asparagine 112, and asparagine 116. The interval 117 to 208 (GSHTIQVMYG…ENRKKTQECT (92 aa)) is alpha-2. Intrachain disulfides connect cysteine 127–cysteine 190 and cysteine 229–cysteine 285. The alpha-3 stretch occupies residues 209–300 (DPPKTHVTHH…GLPEPLTLRW (92 aa)). The Ig-like C1-type domain occupies 211 to 299 (PKTHVTHHPR…EGLPEPLTLR (89 aa)). The interval 301–314 (EPPQTSMPNRTTVR) is connecting peptide. N-linked (GlcNAc...) asparagine glycosylation is present at asparagine 309. The helical transmembrane segment at 315-334 (ALLGAMIILGFMSGSVMMWM) threads the bilayer. The Cytoplasmic segment spans residues 335-384 (RKNNGGNGDDNTAAYQNEREHLSLDPRAESEALGVEAGMKDLPSAPPLVS). Positions 354–364 (EHLSLDPRAES) are enriched in basic and acidic residues. The tract at residues 354 to 384 (EHLSLDPRAESEALGVEAGMKDLPSAPPLVS) is disordered.

The protein belongs to the MHC class I family. In terms of assembly, heterodimer of an alpha chain and a beta chain (beta-2-microglobulin). As to expression, TL antigens are only expressed on thymocytes, activated T-lymphocytes and on some thymic leukemias.

The protein resides in the membrane. Functionally, involved in the presentation of foreign antigens to the immune system. This is H-2 class I histocompatibility antigen, TLA(B) alpha chain (H2-T3) from Mus musculus (Mouse).